The following is a 326-amino-acid chain: Probable cell division protein WhiA (326 aa).

Positions 275–308 form a DNA-binding region, H-T-H motif; it reads SLDELGHYADPPMTKDAVAGRIRRLLAMADKRAS.

It belongs to the WhiA family.

Functionally, involved in cell division and chromosome segregation. The sequence is that of Probable cell division protein WhiA from Leifsonia xyli subsp. xyli (strain CTCB07).